Consider the following 641-residue polypeptide: Hemagglutinin-esterase-fusion glycoprotein (641 aa).

The fusion domain-1 stretch occupies residues 1–26 (EKIKICLQKQVNSSFSLHNGFGGNLY). Residues 1 to 616 (EKIKICLQKQ…QSDPFYWGSS (616 aa)) lie on the Extracellular side of the membrane. Cystine bridges form between Cys-6/Cys-569, Cys-106/Cys-151, Cys-126/Cys-174, Cys-196/Cys-238, Cys-215/Cys-302, Cys-223/Cys-275, and Cys-332/Cys-338. N-linked (GlcNAc...) asparagine; by host glycosylation is found at Asn-12 and Asn-47. The interval 27–137 (ATEEKRMFEL…RKNWTDIKLN (111 aa)) is esterase domain-1. The Nucleophile role is filled by Ser-57. The N-linked (GlcNAc...) asparagine; by host glycan is linked to Asn-130. The N-acetyl-9-O-acetylneuraminic acid binding stretch occupies residues 137–296 (NFQKNIYELA…VRSSPRFLLM (160 aa)). The interval 297 to 351 (PERSYCFDMKEKGPVTAVQSIWGKDRKSDYAVDQACLSTPGCMLIQKQKPYTGEA) is esterase domain-2. Catalysis depends on charge relay system residues Asp-352 and His-355. Positions 352 to 637 (DDHHGDQEMR…AALVISGIAI (286 aa)) are fusion domain-2. Residue Asn-381 is glycosylated (N-linked (GlcNAc...) asparagine; by host). The helical transmembrane segment at 617–637 (LGLAITAAISLAALVISGIAI) threads the bilayer. The Cytoplasmic segment spans residues 638-641 (CRTK).

The protein belongs to the influenza type C/coronaviruses hemagglutinin-esterase family. As to quaternary structure, homotrimer of disulfide-linked HEF1-HEF2. In terms of processing, in natural infection, inactive HEF is matured into HEF1 and HEF2 outside the cell by one or more trypsin-like, arginine-specific endoprotease.

Its subcellular location is the virion membrane. It is found in the host cell membrane. The catalysed reaction is N-acetyl-9-O-acetylneuraminate + H2O = N-acetylneuraminate + acetate + H(+). It catalyses the reaction N-acetyl-4-O-acetylneuraminate + H2O = N-acetylneuraminate + acetate + H(+). In terms of biological role, binds to the N-acetyl-9-O-acetylneuraminic acid residues on the cell surface, bringing about the attachment of the virus particle to the cell. Plays a major role in the determination of host range restriction and virulence. Class I viral fusion protein. Responsible for penetration of the virus into the cell cytoplasm by mediating the fusion of the membrane of the endocytosed virus particle with the endosomal membrane. Low pH in endosomes induce an irreversible conformational change in HEF2, releasing the fusion hydrophobic peptide. Several trimers are required to form a competent fusion pore. Displays a receptor-destroying activity which is a neuraminidate-O-acetyl esterase. This activity cleaves off any receptor on the cell surface, which would otherwise prevent virions release. These cleavages prevent self-aggregation and ensure the efficient spread of the progeny virus from cell to cell. The sequence is that of Hemagglutinin-esterase-fusion glycoprotein (HE) from Influenza C virus (strain C/Kyoto/41/1982).